A 145-amino-acid chain; its full sequence is Arginine repressor (145 aa).

This sequence belongs to the ArgR family.

The protein resides in the cytoplasm. Its pathway is amino-acid biosynthesis; L-arginine biosynthesis [regulation]. In terms of biological role, regulates arginine biosynthesis genes. The chain is Arginine repressor from Solibacter usitatus (strain Ellin6076).